The sequence spans 398 residues: S-adenosylmethionine synthase (398 aa).

Residues 1-21 (MAANRRLFTSESVTEGHPDKM) form a disordered region. His-17 contacts ATP. Residue Asp-19 coordinates Mg(2+). A K(+)-binding site is contributed by Glu-45. L-methionine-binding residues include Glu-58 and Gln-101. Residues 101–111 (QSADIAGGVNQ) form a flexible loop region. Residues 177–179 (DGK), 244–245 (RF), Asp-253, 259–260 (RK), Ala-276, and Lys-280 each bind ATP. Residue Asp-253 participates in L-methionine binding. Position 284 (Lys-284) interacts with L-methionine.

Belongs to the AdoMet synthase family. In terms of assembly, homotetramer; dimer of dimers. Requires Mg(2+) as cofactor. It depends on K(+) as a cofactor.

It localises to the cytoplasm. It carries out the reaction L-methionine + ATP + H2O = S-adenosyl-L-methionine + phosphate + diphosphate. It participates in amino-acid biosynthesis; S-adenosyl-L-methionine biosynthesis; S-adenosyl-L-methionine from L-methionine: step 1/1. Catalyzes the formation of S-adenosylmethionine (AdoMet) from methionine and ATP. The overall synthetic reaction is composed of two sequential steps, AdoMet formation and the subsequent tripolyphosphate hydrolysis which occurs prior to release of AdoMet from the enzyme. The chain is S-adenosylmethionine synthase from Oceanobacillus iheyensis (strain DSM 14371 / CIP 107618 / JCM 11309 / KCTC 3954 / HTE831).